Consider the following 332-residue polypeptide: Large ribosomal subunit protein uL10 (332 aa).

The tract at residues 294-332 (QAAAAPVAVEDNTEEPEEEEEEEEDAAESAAAGLGALFG) is disordered. The span at 304–320 (DNTEEPEEEEEEEEDAA) shows a compositional bias: acidic residues.

The protein belongs to the universal ribosomal protein uL10 family. In terms of assembly, part of the 50S ribosomal subunit. Forms part of the ribosomal stalk which helps the ribosome interact with GTP-bound translation factors. Forms a heptameric L10(L12)2(L12)2(L12)2 complex, where L10 forms an elongated spine to which the L12 dimers bind in a sequential fashion.

In terms of biological role, forms part of the ribosomal stalk, playing a central role in the interaction of the ribosome with GTP-bound translation factors. The chain is Large ribosomal subunit protein uL10 from Methanosphaera stadtmanae (strain ATCC 43021 / DSM 3091 / JCM 11832 / MCB-3).